The primary structure comprises 150 residues: MKLILIKDCPSGKANTIVEVSDGYAKNFLIPRKFAIAYTEENAKKLKQKLEQEKLDFSLKTKEFLELKEKLEKLKLTFKLKASLDKNHKLETHHSISAKKLLERLHELGFDLPKHSIEKVHLNLIGINHVNVKLFDKIVAKLTVVIEADV.

The protein belongs to the bacterial ribosomal protein bL9 family.

Functionally, binds to the 23S rRNA. The chain is Large ribosomal subunit protein bL9 from Mycoplasmopsis pulmonis (strain UAB CTIP) (Mycoplasma pulmonis).